A 273-amino-acid chain; its full sequence is MDFSNMSILHYLANIVDILVVWFVIYKVIMLIRGTKAVQLLKGIFIIIAVKLLSGFFGLQTVEWITDQMLTWGFLAIIIIFQPELRRALETLGRGNIFTRYGSRIEREQHHLIESIEKSTQYMAKRRIGALISVARDTGMDDYIETGIPLNAKISSQLLINIFIPNTPLHDGAVIIKGNEIASAASYLPLSDSPFLSKELGTRHRAALGISEVTDSITIVVSEETGGISLTKGGELFRDVSEEELHKILLKELVTVTAKKPSIFSKWKGGKSE.

Helical transmembrane passes span 12–32, 37–57, and 61–81; these read LANI…IMLI, AVQL…SGFF, and TVEW…IIIF. The DAC domain maps to 82–242; it reads QPELRRALET…GGELFRDVSE (161 aa).

The protein belongs to the adenylate cyclase family. DacA/CdaA subfamily. Probably a homodimer.

It localises to the cell membrane. The enzyme catalyses 2 ATP = 3',3'-c-di-AMP + 2 diphosphate. Its function is as follows. Catalyzes the condensation of 2 ATP molecules into cyclic di-AMP (c-di-AMP), a signaling compound secreted into the host's cytosol where it triggers the cytosolic surveillance pathway (CSP), a host pathway of innate immunity characterized by expression of beta interferon (IFN-beta) and coregulated genes. Overexpression increases export of c-di-AMP. c-di-AMP is a second messenger that mediates growth, cell wall stability and virulence. This is Diadenylate cyclase from Listeria monocytogenes serotype 1/2a (strain 10403S).